The chain runs to 113 residues: Large ribosomal subunit protein uL24 (113 aa).

This sequence belongs to the universal ribosomal protein uL24 family. As to quaternary structure, part of the 50S ribosomal subunit.

One of two assembly initiator proteins, it binds directly to the 5'-end of the 23S rRNA, where it nucleates assembly of the 50S subunit. In terms of biological role, one of the proteins that surrounds the polypeptide exit tunnel on the outside of the subunit. The chain is Large ribosomal subunit protein uL24 from Micrococcus luteus (Micrococcus lysodeikticus).